A 495-amino-acid chain; its full sequence is Cobyric acid synthase (495 aa).

The 195-residue stretch at 249 to 443 folds into the GATase cobBQ-type domain; it reads EININVIRLP…LHGLFDNGAW (195 aa). Catalysis depends on Cys-330, which acts as the Nucleophile. The active site involves His-435.

Belongs to the CobB/CobQ family. CobQ subfamily.

It functions in the pathway cofactor biosynthesis; adenosylcobalamin biosynthesis. Catalyzes amidations at positions B, D, E, and G on adenosylcobyrinic A,C-diamide. NH(2) groups are provided by glutamine, and one molecule of ATP is hydrogenolyzed for each amidation. The sequence is that of Cobyric acid synthase from Gloeothece citriformis (strain PCC 7424) (Cyanothece sp. (strain PCC 7424)).